Reading from the N-terminus, the 188-residue chain is MNLVVYLIQLFLAALLHLSAVKAAHIPKEGGKSKNDVIPFMDVYKKSACKTRELLVDIIQEYPDEIEHTYIPSCVVLMRCAGCCNDEALECVPTETRNVTMEVLRVKQRVSQHNFQLSFTEHTKCECRPKAEVKAKKENHCEPCSERRKRLYVQDPLTCKCSCKFTQMQCKSRQLELNERTCRCEKPR.

The signal sequence occupies residues 1 to 23 (MNLVVYLIQLFLAALLHLSAVKA). 3 disulfide bridges follow: cysteine 49/cysteine 91, cysteine 80/cysteine 125, and cysteine 84/cysteine 127. The N-linked (GlcNAc...) asparagine glycan is linked to asparagine 98.

This sequence belongs to the PDGF/VEGF growth factor family. As to quaternary structure, homodimer; disulfide-linked. Isoform VEGF165 binds kdr and kdrl. In terms of tissue distribution, predominantly expressed in regions associated with active vascularization. From 15-16 hours post-fertilization (hpf), expressed in the anterior forebrain, the mesoderm underlying and lateral to the anterior hindbrain, the mesoderm underlying and lateral to the posterior hindbrain, and in the ventral medial portions of the somites. By 30-36 hpf, expression in the somites is decreased, while strong expression is observed in the region of the developing glomeruli and in the anterior portion of the pronephric ducts, the pharyngeal arches, and the brain. By 72 hpf, expression remains only in the pronephros region.

It localises to the secreted. In terms of biological role, growth factor active in angiogenesis, vasculogenesis and endothelial cell growth. Induces endothelial cell proliferation, promotes cell migration, inhibits apoptosis, and induces permeabilization of blood vessels. Required for intersegmental vessel development in the tail during embryogenesis. Acts both upstream of kdr and tie1 to stimulate endothelial cell differentiation, and upstream of gata1 to stimulate hematopoietic cell differentiation. The chain is Vascular endothelial growth factor A-A (vegfaa) from Danio rerio (Zebrafish).